A 564-amino-acid polypeptide reads, in one-letter code: Phenylalanine--tRNA ligase beta subunit (564 aa).

Positions 286–362 (YFQNSLKINV…IGKGLDNFKS (77 aa)) constitute a B5 domain. Positions 340, 346, 349, and 350 each coordinate Mg(2+).

The protein belongs to the phenylalanyl-tRNA synthetase beta subunit family. Type 2 subfamily. In terms of assembly, tetramer of two alpha and two beta subunits. It depends on Mg(2+) as a cofactor.

Its subcellular location is the cytoplasm. The catalysed reaction is tRNA(Phe) + L-phenylalanine + ATP = L-phenylalanyl-tRNA(Phe) + AMP + diphosphate + H(+). This is Phenylalanine--tRNA ligase beta subunit from Borrelia duttonii (strain Ly).